Reading from the N-terminus, the 421-residue chain is UDP-N-acetylglucosamine 1-carboxyvinyltransferase (421 aa).

22–23 contacts phosphoenolpyruvate; the sequence is KN. Arginine 93 is a binding site for UDP-N-acetyl-alpha-D-glucosamine. Residue cysteine 117 is the Proton donor of the active site. Residue cysteine 117 is modified to 2-(S-cysteinyl)pyruvic acid O-phosphothioketal. Residues 122–126, aspartate 308, and isoleucine 330 contribute to the UDP-N-acetyl-alpha-D-glucosamine site; that span reads RPVDL.

It belongs to the EPSP synthase family. MurA subfamily.

The protein localises to the cytoplasm. It carries out the reaction phosphoenolpyruvate + UDP-N-acetyl-alpha-D-glucosamine = UDP-N-acetyl-3-O-(1-carboxyvinyl)-alpha-D-glucosamine + phosphate. Its pathway is cell wall biogenesis; peptidoglycan biosynthesis. Cell wall formation. Adds enolpyruvyl to UDP-N-acetylglucosamine. In Pseudomonas putida (strain GB-1), this protein is UDP-N-acetylglucosamine 1-carboxyvinyltransferase.